Here is a 454-residue protein sequence, read N- to C-terminus: Pyrimidine/purine nucleotide 5'-monophosphate nucleosidase (454 aa).

This sequence belongs to the LOG family.

The catalysed reaction is a pyrimidine ribonucleoside 5'-phosphate + H2O = a pyrimidine nucleobase + D-ribose 5-phosphate. The enzyme catalyses AMP + H2O = adenine + D-ribose 5-phosphate. It catalyses the reaction GMP + H2O = guanine + D-ribose 5-phosphate. It carries out the reaction CMP + H2O = cytosine + D-ribose 5-phosphate. The catalysed reaction is IMP + H2O = hypoxanthine + D-ribose 5-phosphate. The enzyme catalyses UMP + H2O = D-ribose 5-phosphate + uracil. It catalyses the reaction dTMP + H2O = 2-deoxy-D-ribose 5-phosphate + thymine. In terms of biological role, catalyzes the hydrolysis of the N-glycosidic bond of diverse pyrimidine and purine nucleotide 5'-monophosphates, to form ribose 5-phosphate and the corresponding free base. Can use AMP, GMP, IMP, CMP, dTMP and UMP as substrates. Cannot catalyze the reverse reactions. May contribute to nucleoside pool homeostasis by degrading excess nucleotides and feeding back the ribose moiety to catabolism. The protein is Pyrimidine/purine nucleotide 5'-monophosphate nucleosidase of Escherichia coli O157:H7.